Here is a 645-residue protein sequence, read N- to C-terminus: Translation factor GUF1 homolog, mitochondrial (645 aa).

Residues 40 to 215 enclose the tr-type G domain; that stretch reads EKIRNFGIVA…AIVERVPAPT (176 aa). GTP is bound by residues 49–56, 108–112, and 162–165; these read AHVDHGKS, DTPGH, and NKID.

This sequence belongs to the TRAFAC class translation factor GTPase superfamily. Classic translation factor GTPase family. LepA subfamily.

The protein resides in the mitochondrion inner membrane. The catalysed reaction is GTP + H2O = GDP + phosphate + H(+). Its function is as follows. Promotes mitochondrial protein synthesis. May act as a fidelity factor of the translation reaction, by catalyzing a one-codon backward translocation of tRNAs on improperly translocated ribosomes. Binds to mitochondrial ribosomes in a GTP-dependent manner. In Caenorhabditis briggsae, this protein is Translation factor GUF1 homolog, mitochondrial.